The sequence spans 452 residues: UDP-N-acetylmuramoylalanine--D-glutamate ligase (452 aa).

119–125 (GSNGKTT) contributes to the ATP binding site.

Belongs to the MurCDEF family.

It is found in the cytoplasm. It carries out the reaction UDP-N-acetyl-alpha-D-muramoyl-L-alanine + D-glutamate + ATP = UDP-N-acetyl-alpha-D-muramoyl-L-alanyl-D-glutamate + ADP + phosphate + H(+). It participates in cell wall biogenesis; peptidoglycan biosynthesis. Its function is as follows. Cell wall formation. Catalyzes the addition of glutamate to the nucleotide precursor UDP-N-acetylmuramoyl-L-alanine (UMA). In Streptococcus pyogenes serotype M5 (strain Manfredo), this protein is UDP-N-acetylmuramoylalanine--D-glutamate ligase.